The following is a 76-amino-acid chain: Putative small nuclear ribonucleoprotein G-like protein 15 (76 aa).

The Sm domain occupies A4–V76.

Belongs to the snRNP Sm proteins family.

The protein resides in the nucleus. Functionally, associated with snRNP U1, U2, U4/U6 and U5. The polypeptide is Putative small nuclear ribonucleoprotein G-like protein 15 (SNRPGP15) (Homo sapiens (Human)).